The primary structure comprises 492 residues: Solute carrier family 2, facilitated glucose transporter member 1 (492 aa).

An N-acetylmethionine modification is found at methionine 1. At 1–11 (MEPSSKKVTGR) the chain is on the cytoplasmic side. The chain crosses the membrane as a helical span at residues 12–33 (LMLAVGGAVLGSLQFGYNTGVI). At 34–66 (NAPQKVIEEFYNQTWNHRYGESIPSTTLTTLWS) the chain is on the extracellular side. Residue asparagine 45 is glycosylated (N-linked (GlcNAc...) asparagine). The chain crosses the membrane as a helical span at residues 67-87 (LSVAIFSVGGMIGSFSVGLFV). Residues 88-90 (NRF) lie on the Cytoplasmic side of the membrane. A helical membrane pass occupies residues 91 to 112 (GRRNSMLMMNLLAFVSAVLMGF). The Extracellular portion of the chain corresponds to 113-120 (SKLGKSFE). Residues 121–144 (MLILGRFIIGVYCGLTTGFVPMYV) traverse the membrane as a helical segment. Residues 145–155 (GEVSPTALRGA) are Cytoplasmic-facing. The helical transmembrane segment at 156 to 176 (LGTLHQLGIVVGILIAQVFGL) threads the bilayer. Position 161 (glutamine 161) interacts with D-glucose. Residues 177–185 (DSIMGNADL) lie on the Extracellular side of the membrane. The chain crosses the membrane as a helical span at residues 186 to 206 (WPLLLSVIFIPALLQCILLPF). Residues 207 to 271 (CPESPRFLLI…LFRSPAYRQP (65 aa)) are Cytoplasmic-facing. Position 226 is a phosphoserine (serine 226). Residues 272–293 (ILIAVVLQLSQQLSGINAVFYY) traverse the membrane as a helical segment. D-glucose-binding positions include 282 to 283 (QQ) and asparagine 288. At 294 to 306 (STSIFEKAGVQQP) the chain is on the extracellular side. The helical transmembrane segment at 307–328 (VYATIGSGIVNTAFTVVSLFVV) threads the bilayer. Asparagine 317 serves as a coordination point for D-glucose. The Cytoplasmic portion of the chain corresponds to 329 to 334 (ERAGRR). The chain crosses the membrane as a helical span at residues 335–355 (TLHLIGLAGMAGCAVLMTIAL). The Extracellular segment spans residues 356-365 (ALLEQLPWMS). A helical membrane pass occupies residues 366–388 (YLSIVAIFGFVAFFEVGPGPIPW). Glutamate 380 and tryptophan 388 together coordinate D-glucose. Residues 389 to 401 (FIVAELFSQGPRP) lie on the Cytoplasmic side of the membrane. Residues 402-422 (AAVAVAGFSNWTSNFIVGMCF) traverse the membrane as a helical segment. The Extracellular segment spans residues 423 to 429 (QYVEQLC). A helical transmembrane segment spans residues 430 to 450 (GPYVFIIFTVLLVLFFIFTYF). The Cytoplasmic segment spans residues 451–492 (KVPETKGRTFDEIASGFRQGGASQSDKTPEELFHPLGADSQV). The residue at position 465 (serine 465) is a Phosphoserine. Residues 468 to 492 (RQGGASQSDKTPEELFHPLGADSQV) are disordered. Position 478 is a phosphothreonine (threonine 478). Position 490 is a phosphoserine (serine 490).

It belongs to the major facilitator superfamily. Sugar transporter (TC 2.A.1.1) family. Glucose transporter subfamily. Found in a complex with ADD2, DMTN and SLC2A1. Interacts (via C-terminus cytoplasmic region) with DMTN. Interacts with SNX27; the interaction is required when endocytosed to prevent degradation in lysosomes and promote recycling to the plasma membrane. Interacts with STOM. Interacts with GIPC (via PDZ domain). Interacts with SGTA (via Gln-rich region). Interacts with isoform 1 of BSG. Interacts with SMIM43; the interaction may promote SLC2A1-mediated glucose transport to meet the energy needs of mesendoderm differentiation. Post-translationally, phosphorylation at Ser-226 by PKC promotes glucose uptake by increasing cell membrane localization. In terms of tissue distribution, detected in osteoblastic cells (at protein level). Detected in brain, and at lower levels in kidney, heart and lung.

Its subcellular location is the cell membrane. The protein resides in the photoreceptor inner segment. The catalysed reaction is D-glucose(out) = D-glucose(in). The uptake of glucose is inhibited by cytochalasin B. Glucose uptake is increased in response to phorbol ester 12-O-tetradecanoylphorbol-13-acetate (TPA) treatment: TPA-induced glucose uptake requires phosphorylation at Ser-226. Facilitative glucose transporter, which is responsible for constitutive or basal glucose uptake. Has a very broad substrate specificity; can transport a wide range of aldoses including both pentoses and hexoses. Most important energy carrier of the brain: present at the blood-brain barrier and assures the energy-independent, facilitative transport of glucose into the brain. In association with BSG and NXNL1, promotes retinal cone survival by increasing glucose uptake into photoreceptors. Required for mesendoderm differentiation. This chain is Solute carrier family 2, facilitated glucose transporter member 1, found in Rattus norvegicus (Rat).